Here is a 484-residue protein sequence, read N- to C-terminus: Glutamate--tRNA ligase (484 aa).

Positions 12-22 (PSPTGEPHVGT) match the 'HIGH' region motif. Positions 253 to 257 (KLSKR) match the 'KMSKS' region motif. K256 serves as a coordination point for ATP.

This sequence belongs to the class-I aminoacyl-tRNA synthetase family. Glutamate--tRNA ligase type 1 subfamily. As to quaternary structure, monomer.

It localises to the cytoplasm. It carries out the reaction tRNA(Glu) + L-glutamate + ATP = L-glutamyl-tRNA(Glu) + AMP + diphosphate. Catalyzes the attachment of glutamate to tRNA(Glu) in a two-step reaction: glutamate is first activated by ATP to form Glu-AMP and then transferred to the acceptor end of tRNA(Glu). The sequence is that of Glutamate--tRNA ligase from Rhizobium etli (strain CIAT 652).